The sequence spans 544 residues: Inward rectifier potassium channel irk-1 (544 aa).

Residues 1–109 lie on the Cytoplasmic side of the membrane; it reads MTLSVPDCAE…IFTTMIDVKW (109 aa). The helical transmembrane segment at 110–134 threads the bilayer; that stretch reads RWMLMLFASAFVLSWSIFGTTYYLI. Residues 135–158 lie on the Extracellular side of the membrane; it reads ALVHGDLSLPTPVNHTACVMNLDS. Residues 159–170 constitute an intramembrane region (helical; Pore-forming); it reads VYSSFLFAVETH. The segment at residues 171-177 is an intramembrane region (pore-forming); sequence HTIGYGH. Residues 172-177 carry the Selectivity filter motif; that stretch reads TIGYGH. The Extracellular portion of the chain corresponds to 178-186; the sequence is RYITTECYL. The helical transmembrane segment at 187–208 threads the bilayer; the sequence is AGAIVCLQAICALLLQSFMVGI. Topologically, residues 209-544 are cytoplasmic; it reads VFAKMARPKK…PIHIEIVSET (336 aa). 2 disordered regions span residues 411-448 and 512-533; these read HKLEDNRSSDSTPLPSPSPYSYPSTPLNHFQSSSNSPV and LSDLEEECSDSGSPTKCQSPPV. A compositionally biased stretch (polar residues) spans 438–448; sequence NHFQSSSNSPV.

It belongs to the inward rectifier-type potassium channel (TC 1.A.2.1) family. In terms of tissue distribution, expressed in neurons in the head and tail with no expression detected in non-neuronal cells in these regions. Also detected in the egg-laying system of adult hermaphordites with strong expression in the HSN motor neurons and weak expression in vulval muscles.

The protein resides in the membrane. It localises to the perikaryon. The protein localises to the cell projection. Inward rectifier potassium channels are characterized by a greater tendency to allow potassium to flow into the cell rather than out of it. Required for modulation of the activity of the hermaphrodite-specific neurons (HSNs) by the G-protein coupled neuropeptide receptor egl-6 which in turn controls egg-laying behavior. This is Inward rectifier potassium channel irk-1 (irk-1) from Caenorhabditis elegans.